The primary structure comprises 102 residues: Small ribosomal subunit protein uS14 (102 aa).

It belongs to the universal ribosomal protein uS14 family. In terms of assembly, part of the 30S ribosomal subunit. Contacts proteins S3 and S10.

Functionally, binds 16S rRNA, required for the assembly of 30S particles and may also be responsible for determining the conformation of the 16S rRNA at the A site. This Wolbachia pipientis wMel protein is Small ribosomal subunit protein uS14.